The following is an 816-amino-acid chain: Phosphatidylinositol 4-kinase beta (816 aa).

3 disordered regions span residues 1–30 (MGDT…GSLL), 99–120 (EEED…RRRR), and 248–318 (AHRK…SFSS). An N-acetylglycine modification is found at Gly2. The interval 2 to 68 (GDTVVEPAPL…VKLLHGGVAV (67 aa)) is interaction with ACBD3. Positions 52–242 (CQDVLEKVKL…GTKLRKLILS (191 aa)) constitute a PIK helical domain. Position 258 is a phosphoserine (Ser258). Thr263 carries the post-translational modification Phosphothreonine. Phosphoserine is present on residues Ser266, Ser275, Ser277, Ser284, and Ser294. Composition is skewed to polar residues over residues 278–297 (DATA…SNPK) and 306–318 (SSST…SFSS). Ser428 bears the Phosphoserine mark. Residue Thr438 is modified to Phosphothreonine. Ser511 is subject to Phosphoserine. Thr517 and Thr519 each carry phosphothreonine. Positions 535–801 (EPWQEKVRRI…MVDGSMRSIT (267 aa)) constitute a PI3K/PI4K catalytic domain. Residues 541–547 (VRRIREG) are G-loop. A catalytic loop region spans residues 668 to 676 (QVKDRHNGN). The activation loop stretch occupies residues 687–711 (HIDFGFILSSSPRNLGFETSAFKLT).

The protein belongs to the PI3/PI4-kinase family. Type III PI4K subfamily. As to quaternary structure, interacts with ARF1 and ARF3 in the Golgi complex, but not with ARF4, ARF5 or ARF6. Interacts with NCS1/FREQ in a calcium-independent manner. Interacts with CALN1/CABP8 and CALN2/CABP7; in a calcium-dependent manner; this interaction competes with NCS1/FREQ binding. Interacts with ACBD3. Interacts with ARMH3, YWHAB, YWHAE, YWHAG, YWHAH, YWHAQ, YWHAZ and SFN. Interacts with GGA2 (via VHS domain); the interaction is important for PI4KB location at the Golgi apparatus membrane. Interacts with ATG9A. Requires Mg(2+) as cofactor. Mn(2+) serves as cofactor.

It is found in the endomembrane system. The protein localises to the mitochondrion outer membrane. The protein resides in the rough endoplasmic reticulum membrane. Its subcellular location is the golgi apparatus. It localises to the golgi apparatus membrane. The catalysed reaction is a 1,2-diacyl-sn-glycero-3-phospho-(1D-myo-inositol) + ATP = a 1,2-diacyl-sn-glycero-3-phospho-(1D-myo-inositol 4-phosphate) + ADP + H(+). With respect to regulation, inhibited by wortmannin. Increased kinase activity upon interaction with NCS1/FREQ. Functionally, phosphorylates phosphatidylinositol (PI) in the first committed step in the production of the second messenger inositol-1,4,5,-trisphosphate (PIP). May regulate Golgi disintegration/reorganization during mitosis, possibly via its phosphorylation. Involved in Golgi-to-plasma membrane trafficking. This Callithrix jacchus (White-tufted-ear marmoset) protein is Phosphatidylinositol 4-kinase beta (PI4KB).